The chain runs to 1482 residues: Cystic fibrosis transmembrane conductance regulator (1482 aa).

Topologically, residues 1 to 77 (MQRSPLEKAN…KLINALRRCF (77 aa)) are cytoplasmic. A helical membrane pass occupies residues 78–98 (FWRFVFHGIILYLGEVTKAVQ). Residues 81-365 (FVFHGIILYL…WAVQTWYDSL (285 aa)) form the ABC transmembrane type-1 1 domain. Residues 99–122 (PLLLGRIIASYDPDNKVERSIAIY) are Extracellular-facing. Residues 123–146 (LGIGLCLLFIVRTLLLHPAIFGLH) form a helical membrane-spanning segment. The Cytoplasmic portion of the chain corresponds to 147 to 195 (HMGMQMRIALFSLIYKKTLKLSSRVLDKISTGQLISLLSNNLNKFDEGL). Residues 196–216 (ALAHFVWIVPLQVVLLMGLLW) form a helical membrane-spanning segment. The Extracellular segment spans residues 217 to 222 (DLLQAS). A helical transmembrane segment spans residues 223–243 (AFCGLAFLIVLALFQAWLGQM). The Cytoplasmic segment spans residues 244–298 (MMKYRERRAGKINERLVITSEMIDNIQSVKAYCWEEAMEKMIENLRETELKLTRK). Residues 299 to 319 (TAYVRYFNSSAFFFSGFFVVF) traverse the membrane as a helical segment. The Extracellular portion of the chain corresponds to 320 to 339 (LAVLPYALIKGIILRKIFTT). A helical transmembrane segment spans residues 340-358 (ISFCIVLRMAVTRQFPWAV). Residues 359-859 (QTWYDSLGAI…YLRYITIHKN (501 aa)) are Cytoplasmic-facing. ATP contacts are provided by residues Trp-401, Ser-434, 458–465 (GSTGAGKT), and Gln-493. The 224-residue stretch at 423 to 646 (NGDNGLFFSN…RPDFSSKLMG (224 aa)) folds into the ABC transporter 1 domain. Cys-524 carries S-palmitoyl cysteine lipidation. Phosphoserine occurs at positions 549 and 660. The segment at 654–832 (SAERRSSILT…DEINEEDLKE (179 aa)) is disordered R region. Ser-670 carries the phosphoserine; by PKA modification. Position 686 is a phosphoserine (Ser-686). Lys-688 is covalently cross-linked (Glycyl lysine isopeptide (Lys-Gly) (interchain with G-Cter in ubiquitin)). Phosphoserine occurs at positions 700, 712, 737, 769, 796, and 814. The helical transmembrane segment at 860 to 880 (LVFVLIWCLVIFLVEVAASLV) threads the bilayer. Positions 860-1156 (LVFVLIWCLV…AVNSSIDVDS (297 aa)) constitute an ABC transmembrane type-1 2 domain. Residues 881–919 (GLWLLEDISFKDKTNGTNGANNTFPVIITDTSKYYLFYI) lie on the Extracellular side of the membrane. Asn-895 and Asn-901 each carry an N-linked (GlcNAc...) asparagine glycan. A discontinuously helical transmembrane segment spans residues 920–940 (YVGIADTFFALGIFRGLPLVH). Residues 941 to 991 (TLISVSKILHHKMLYSVLKAPMSTFNTLKPGGILNRFSKDIAILDDLLPLT) lie on the Cytoplasmic side of the membrane. A helical transmembrane segment spans residues 992-1012 (IFDFIQLILIVVGALIVVSAI). Residues 1013–1014 (RP) lie on the Extracellular side of the membrane. A helical membrane pass occupies residues 1015-1035 (YIFLATVPVIIAFIMLRAYFL). The Cytoplasmic portion of the chain corresponds to 1036–1096 (QTSQQLKQLE…TASWFLYLST (61 aa)). Residues 1097 to 1117 (LRWFQMRIELVFVIFFIAVTF) form a helical membrane-spanning segment. At 1118–1131 (ISILTTGDGEGRVG) the chain is on the extracellular side. A helical transmembrane segment spans residues 1132–1152 (ILLTLAMNIMSTLQWAVNSSI). Over 1153–1482 (DVDSLMRSVS…TEEEVQETRL (330 aa)) the chain is Cytoplasmic. One can recognise an ABC transporter 2 domain in the interval 1212–1445 (MIVKDLTAKY…KSLYRQAISH (234 aa)). ATP-binding positions include Tyr-1221 and 1246 to 1253 (GRTGSGKS). The tract at residues 1388-1482 (RVLKNAFANC…TEEEVQETRL (95 aa)) is interaction with GORASP2. Cys-1397 is lipidated: S-palmitoyl cysteine. Residues Ser-1446 and Ser-1458 each carry the phosphoserine modification. The PDZ-binding motif lies at 1480-1482 (TRL).

This sequence belongs to the ABC transporter superfamily. ABCC family. CFTR transporter (TC 3.A.1.202) subfamily. In terms of assembly, monomer; does not require oligomerization for channel activity. May form oligomers in the membrane. Interacts with SLC26A3, SLC26A6 and NHERF1. Interacts with SHANK2. Interacts with MYO6. Interacts (via C-terminus) with GOPC (via PDZ domain); this promotes CFTR internalization and thereby decreases channel activity. Interacts with SLC4A7 through NHERF1. Found in a complex with MYO5B and RAB11A. Interacts with ANO1. Interacts with SLC26A8. Interacts with AHCYL1; the interaction increases CFTR activity. Interacts with CSE1L. The core-glycosylated form interacts with GORASP2 (via PDZ GRASP-type 1 domain) in respone to ER stress. Interacts with MARCHF2; the interaction leads to CFTR ubiqtuitination and degradation. Interacts with ADGRG2. N-glycosylated. Post-translationally, phosphorylated; cAMP treatment promotes phosphorylation and activates the channel. Dephosphorylation decreases the ATPase activity (in vitro). Phosphorylation at PKA sites activates the channel. Phosphorylation at PKC sites enhances the response to phosphorylation by PKA. Phosphorylated by AMPK; this inhibits channel activity. In terms of processing, ubiquitinated, leading to its degradation in the lysosome. Deubiquitination by USP10 in early endosomes enhances its endocytic recycling to the cell membrane. Ubiquitinated by RNF185 during ER stress. Ubiquitinated by MARCHF2.

It localises to the apical cell membrane. It is found in the early endosome membrane. The protein resides in the cell membrane. Its subcellular location is the recycling endosome membrane. The protein localises to the endoplasmic reticulum membrane. It localises to the nucleus. The enzyme catalyses ATP + H2O + closed Cl(-) channel = ADP + phosphate + open Cl(-) channel.. It catalyses the reaction chloride(in) = chloride(out). The catalysed reaction is hydrogencarbonate(in) = hydrogencarbonate(out). It carries out the reaction ATP + H2O = ADP + phosphate + H(+). Its function is as follows. Epithelial ion channel that plays an important role in the regulation of epithelial ion and water transport and fluid homeostasis. Mediates the transport of chloride ions across the cell membrane. Possesses an intrinsic ATPase activity and utilizes ATP to gate its channel; the passive flow of anions through the channel is gated by cycles of ATP binding and hydrolysis by the ATP-binding domains. The ion channel is also permeable to HCO(3)(-); selectivity depends on the extracellular chloride concentration. Exerts its function also by modulating the activity of other ion channels and transporters. Contributes to the regulation of the pH and the ion content of the epithelial fluid layer. Modulates the activity of the epithelial sodium channel (ENaC) complex, in part by regulating the cell surface expression of the ENaC complex. May regulate bicarbonate secretion and salvage in epithelial cells by regulating the transporter SLC4A7. Can inhibit the chloride channel activity of ANO1. Plays a role in the chloride and bicarbonate homeostasis during sperm epididymal maturation and capacitation. The chain is Cystic fibrosis transmembrane conductance regulator from Didelphis virginiana (North American opossum).